The primary structure comprises 142 residues: Photosystem II extrinsic protein U (142 aa).

The signal sequence occupies residues 1 to 28; that stretch reads MKKIGLLLTIFSLCLGCLGLVPSDKAHA.

Belongs to the PsbU family. As to quaternary structure, PSII is composed of 1 copy each of membrane proteins PsbA, PsbB, PsbC, PsbD, PsbE, PsbF, PsbH, PsbI, PsbJ, PsbK, PsbL, PsbM, PsbT, PsbX, PsbY, PsbZ, Psb30/Ycf12, peripheral proteins PsbO, CyanoQ (PsbQ), PsbU, PsbV and a large number of cofactors. It forms dimeric complexes.

The protein resides in the cellular thylakoid membrane. Functionally, one of the extrinsic, lumenal subunits of photosystem II (PSII). PSII is a light-driven water plastoquinone oxidoreductase, using light energy to abstract electrons from H(2)O, generating a proton gradient subsequently used for ATP formation. The extrinsic proteins stabilize the structure of photosystem II oxygen-evolving complex (OEC), the ion environment of oxygen evolution and protect the OEC against heat-induced inactivation. This chain is Photosystem II extrinsic protein U, found in Trichodesmium erythraeum (strain IMS101).